The following is a 109-amino-acid chain: Biphenyl dioxygenase system ferredoxin subunit (109 aa).

The 97-residue stretch at 4–100 (TRVCDRRDVP…IRIEDNDVLV (97 aa)) folds into the Rieske domain. The [2Fe-2S] cluster site is built by C43, H45, C63, and H66.

It belongs to the bacterial ring-hydroxylating dioxygenase ferredoxin component family. In terms of assembly, this dioxygenase system consists of four proteins: the two subunits of the hydroxylase component (BphA and BphE), a ferredoxin (BphF) and a ferredoxin reductase (BphG).

Functionally, this protein seems to be a 2Fe-2S ferredoxin. This Paraburkholderia xenovorans (strain LB400) protein is Biphenyl dioxygenase system ferredoxin subunit (bphF).